Consider the following 84-residue polypeptide: Small ribosomal subunit protein bS16 (84 aa).

Belongs to the bacterial ribosomal protein bS16 family.

This Delftia acidovorans (strain DSM 14801 / SPH-1) protein is Small ribosomal subunit protein bS16.